The chain runs to 187 residues: UPF0301 protein Ppha_2142 (187 aa).

Belongs to the UPF0301 (AlgH) family.

In Pelodictyon phaeoclathratiforme (strain DSM 5477 / BU-1), this protein is UPF0301 protein Ppha_2142.